The following is a 383-amino-acid chain: ATP phosphoribosyltransferase regulatory subunit (383 aa).

This sequence belongs to the class-II aminoacyl-tRNA synthetase family. HisZ subfamily. In terms of assembly, heteromultimer composed of HisG and HisZ subunits.

It is found in the cytoplasm. It functions in the pathway amino-acid biosynthesis; L-histidine biosynthesis; L-histidine from 5-phospho-alpha-D-ribose 1-diphosphate: step 1/9. Its function is as follows. Required for the first step of histidine biosynthesis. May allow the feedback regulation of ATP phosphoribosyltransferase activity by histidine. The protein is ATP phosphoribosyltransferase regulatory subunit of Paraburkholderia xenovorans (strain LB400).